A 103-amino-acid polypeptide reads, in one-letter code: Putative ribosomal RNA-processing protein 7 homolog B (103 aa).

Basic and acidic residues predominate over residues 1–19 (MEAYDQKIAEEEAKAKEEE). The interval 1 to 25 (MEAYDQKIAEEEAKAKEEEGVPDEE) is disordered. The stretch at 71–100 (ESKMEHLAQLRKKFEEDKQRIELLRAQRKF) forms a coiled coil.

The protein belongs to the RRP7 family.

The chain is Putative ribosomal RNA-processing protein 7 homolog B from Homo sapiens (Human).